A 271-amino-acid polypeptide reads, in one-letter code: 2-dehydro-3-deoxyphosphooctonate aldolase (271 aa).

The protein belongs to the KdsA family.

The protein resides in the cytoplasm. The catalysed reaction is D-arabinose 5-phosphate + phosphoenolpyruvate + H2O = 3-deoxy-alpha-D-manno-2-octulosonate-8-phosphate + phosphate. Its pathway is carbohydrate biosynthesis; 3-deoxy-D-manno-octulosonate biosynthesis; 3-deoxy-D-manno-octulosonate from D-ribulose 5-phosphate: step 2/3. It functions in the pathway bacterial outer membrane biogenesis; lipopolysaccharide biosynthesis. The protein is 2-dehydro-3-deoxyphosphooctonate aldolase of Campylobacter jejuni subsp. jejuni serotype O:6 (strain 81116 / NCTC 11828).